We begin with the raw amino-acid sequence, 459 residues long: ATP synthase subunit beta (459 aa).

Position 148–155 (148–155 (GGAGVGKT)) interacts with ATP.

Belongs to the ATPase alpha/beta chains family. F-type ATPases have 2 components, CF(1) - the catalytic core - and CF(0) - the membrane proton channel. CF(1) has five subunits: alpha(3), beta(3), gamma(1), delta(1), epsilon(1). CF(0) has three main subunits: a(1), b(2) and c(9-12). The alpha and beta chains form an alternating ring which encloses part of the gamma chain. CF(1) is attached to CF(0) by a central stalk formed by the gamma and epsilon chains, while a peripheral stalk is formed by the delta and b chains.

The protein resides in the cell inner membrane. It carries out the reaction ATP + H2O + 4 H(+)(in) = ADP + phosphate + 5 H(+)(out). Functionally, produces ATP from ADP in the presence of a proton gradient across the membrane. The catalytic sites are hosted primarily by the beta subunits. This is ATP synthase subunit beta from Thiobacillus denitrificans (strain ATCC 25259 / T1).